The primary structure comprises 289 residues: Polyamine aminopropyltransferase (289 aa).

The 241-residue stretch at 5–245 (PGPITLIEPL…YAVNFILGSL (241 aa)) folds into the PABS domain. Gln-36 contacts S-methyl-5'-thioadenosine. His-67 and Glu-91 together coordinate spermidine. S-methyl-5'-thioadenosine-binding positions include Asp-111 and 143 to 144 (DG). The active-site Proton acceptor is Asp-164.

It belongs to the spermidine/spermine synthase family. As to quaternary structure, homodimer or homotetramer.

The protein resides in the cytoplasm. It catalyses the reaction S-adenosyl 3-(methylsulfanyl)propylamine + putrescine = S-methyl-5'-thioadenosine + spermidine + H(+). Its pathway is amine and polyamine biosynthesis; spermidine biosynthesis; spermidine from putrescine: step 1/1. In terms of biological role, catalyzes the irreversible transfer of a propylamine group from the amino donor S-adenosylmethioninamine (decarboxy-AdoMet) to putrescine (1,4-diaminobutane) to yield spermidine. This is Polyamine aminopropyltransferase from Pyrobaculum calidifontis (strain DSM 21063 / JCM 11548 / VA1).